Here is a 480-residue protein sequence, read N- to C-terminus: Gasdermin-C2 (480 aa).

The segment at M1–K226 is triggers pyroptosis.

Belongs to the gasdermin family. As to quaternary structure, homooligomer; homooligomeric ring-shaped pore complex containing 27-28 subunits when inserted in the membrane. Cleavage by CASP8 relieves autoinhibition by releasing the N-terminal moiety (Gasdermin-C2, N-terminal) that initiates pyroptosis. Post-translationally, palmitoylated.

The protein localises to the cytoplasm. Its subcellular location is the cytosol. It localises to the cell membrane. Its activity is regulated as follows. The full-length protein before cleavage is inactive: intramolecular interactions between N- and C-terminal domains mediate autoinhibition in the absence of activation signal. The intrinsic pyroptosis-inducing activity is carried by the released N-terminal moiety (Gasdermin-C2, N-terminal) following cleavage by caspase CASP8 in response to type-2 immunity following worm infection. In terms of biological role, this form constitutes the precursor of the pore-forming protein: upon cleavage, the released N-terminal moiety (Gasdermin-C2, N-terminal) binds to membranes and forms pores, triggering pyroptosis. Functionally, pore-forming protein that causes membrane permeabilization and pyroptosis in response to type-2 immunity. Produced by the cleavage of gasdermin-C2 in response to type-2 immunity following worm infection. After cleavage, moves to the plasma membrane where it strongly binds to membrane inner leaflet lipids. Homooligomerizes within the membrane and forms pores of 10-15 nanometers (nm) of inner diameter, triggering pyroptosis and lytic cell death in enterocytes. This chain is Gasdermin-C2, found in Mus musculus (Mouse).